We begin with the raw amino-acid sequence, 623 residues long: Scarecrow-like protein 22 (623 aa).

Disordered stretches follow at residues 62 to 90 and 179 to 203; these read RSPSPFVSSSTTTLSSSHGGPSGGGAAAA and PNPGFFSDPPSSPPAKRLNSGQPGS. Over residues 63-80 the composition is skewed to low complexity; the sequence is SPSPFVSSSTTTLSSSHG. A GRAS domain is found at 235–622; it reads NDQDQSAVII…KELVTVSAWK (388 aa). Positions 242-311 are leucine repeat I (LRI); sequence VIIDQLFSAA…ALHSLLQDSS (70 aa). The VHIID stretch occupies residues 330-398; the sequence is YRAFSETSPF…SSAPSLKITA (69 aa). The short motif at 361-365 is the VHIID element; that stretch reads IHIVD. A leucine repeat II (LRII) region spans residues 413–448; that stretch reads FTEENLRSFAGETGVSFEIELLNMEILLNPTYWPLS. The PFYRE stretch occupies residues 458-545; it reads IAVNLPISSM…RFCVQPSIQK (88 aa). The segment at 548-622 is SAW; the sequence is TNRYRWMERS…KELVTVSAWK (75 aa).

Belongs to the GRAS family. In terms of tissue distribution, expressed in seedlings, roots, leaves and flowers.

The protein resides in the nucleus. In terms of biological role, probable transcription factor involved in plant development. The polypeptide is Scarecrow-like protein 22 (SCL22) (Arabidopsis thaliana (Mouse-ear cress)).